The chain runs to 616 residues: Dihydroxy-acid dehydratase (616 aa).

D81 provides a ligand contact to Mg(2+). C122 provides a ligand contact to [2Fe-2S] cluster. D123 and K124 together coordinate Mg(2+). K124 is subject to N6-carboxylysine. C195 serves as a coordination point for [2Fe-2S] cluster. E491 provides a ligand contact to Mg(2+). S517 acts as the Proton acceptor in catalysis.

Belongs to the IlvD/Edd family. In terms of assembly, homodimer. Requires [2Fe-2S] cluster as cofactor. It depends on Mg(2+) as a cofactor.

The catalysed reaction is (2R)-2,3-dihydroxy-3-methylbutanoate = 3-methyl-2-oxobutanoate + H2O. It catalyses the reaction (2R,3R)-2,3-dihydroxy-3-methylpentanoate = (S)-3-methyl-2-oxopentanoate + H2O. Its pathway is amino-acid biosynthesis; L-isoleucine biosynthesis; L-isoleucine from 2-oxobutanoate: step 3/4. The protein operates within amino-acid biosynthesis; L-valine biosynthesis; L-valine from pyruvate: step 3/4. Its function is as follows. Functions in the biosynthesis of branched-chain amino acids. Catalyzes the dehydration of (2R,3R)-2,3-dihydroxy-3-methylpentanoate (2,3-dihydroxy-3-methylvalerate) into 2-oxo-3-methylpentanoate (2-oxo-3-methylvalerate) and of (2R)-2,3-dihydroxy-3-methylbutanoate (2,3-dihydroxyisovalerate) into 2-oxo-3-methylbutanoate (2-oxoisovalerate), the penultimate precursor to L-isoleucine and L-valine, respectively. This is Dihydroxy-acid dehydratase from Azoarcus sp. (strain BH72).